The primary structure comprises 89 residues: Small ribosomal subunit protein uS15 (89 aa).

This sequence belongs to the universal ribosomal protein uS15 family. In terms of assembly, part of the 30S ribosomal subunit. Forms a bridge to the 50S subunit in the 70S ribosome, contacting the 23S rRNA.

Its function is as follows. One of the primary rRNA binding proteins, it binds directly to 16S rRNA where it helps nucleate assembly of the platform of the 30S subunit by binding and bridging several RNA helices of the 16S rRNA. Functionally, forms an intersubunit bridge (bridge B4) with the 23S rRNA of the 50S subunit in the ribosome. The protein is Small ribosomal subunit protein uS15 of Marinomonas sp. (strain MWYL1).